The sequence spans 344 residues: DNA polymerase III subunit delta (344 aa).

The protein belongs to the DNA polymerase HolA subunit family. In terms of assembly, DNA polymerase III contains a core (composed of alpha, epsilon and theta chains) that associates with a tau subunit. This core dimerizes to form the POLIII' complex. PolIII' associates with the gamma complex (composed of gamma, delta, delta', psi and chi chains) and with the beta chain to form the complete DNA polymerase III complex.

The enzyme catalyses DNA(n) + a 2'-deoxyribonucleoside 5'-triphosphate = DNA(n+1) + diphosphate. Its function is as follows. DNA polymerase III is a complex, multichain enzyme responsible for most of the replicative synthesis in bacteria. This DNA polymerase also exhibits 3' to 5' exonuclease activity. The delta subunit seems to interact with the gamma subunit to transfer the beta subunit on the DNA. The polypeptide is DNA polymerase III subunit delta (holA) (Haemophilus influenzae (strain ATCC 51907 / DSM 11121 / KW20 / Rd)).